A 275-amino-acid polypeptide reads, in one-letter code: MNALTPPRDCLERSQGHAQVTLARVLGAVRLRDLAQRGSAKAFLPRVDGPVPEIVFLNTSGGLTGGDRLSYRLEVGEGCRAVATTQTAERAYAAGRGVAQVRVAHEVGAGGWLDWLPQETILFEDSALDRRTEIVLGPGAGCLMVESVVLGRAAMGETLSRLAFRDLRQITRGGRPVLVEPLALDDRALAAAAGAAVLGGLRALATLALVGPGAEDALGPARAVLDEPGVEAAASAFDGKLLVRMLALDGWPLRRQVARVLGVLRGRALPRVWQD.

The protein belongs to the UreD family. In terms of assembly, ureD, UreF and UreG form a complex that acts as a GTP-hydrolysis-dependent molecular chaperone, activating the urease apoprotein by helping to assemble the nickel containing metallocenter of UreC. The UreE protein probably delivers the nickel.

The protein resides in the cytoplasm. In terms of biological role, required for maturation of urease via the functional incorporation of the urease nickel metallocenter. This chain is Urease accessory protein UreD, found in Cereibacter sphaeroides (strain ATCC 17025 / ATH 2.4.3) (Rhodobacter sphaeroides).